Reading from the N-terminus, the 155-residue chain is Cyanate hydratase (155 aa).

Active-site residues include Arg-101, Glu-104, and Ser-127.

The protein belongs to the cyanase family.

The enzyme catalyses cyanate + hydrogencarbonate + 3 H(+) = NH4(+) + 2 CO2. Catalyzes the reaction of cyanate with bicarbonate to produce ammonia and carbon dioxide. This chain is Cyanate hydratase, found in Coccidioides posadasii (strain C735) (Valley fever fungus).